The primary structure comprises 159 residues: Kojic acid related protein 6 (159 aa).

Functionally, negatively regulates mycelium growth and conidial formation and is required for stress tolerance. Plays a role in kojic acid synthesis in coordination with kojA, kojR and kojT where it acts upstream of kojA. This chain is Kojic acid related protein 6, found in Aspergillus oryzae (strain ATCC 42149 / RIB 40) (Yellow koji mold).